Here is a 133-residue protein sequence, read N- to C-terminus: Putative pre-16S rRNA nuclease (133 aa).

The protein belongs to the YqgF nuclease family.

Its subcellular location is the cytoplasm. Functionally, could be a nuclease involved in processing of the 5'-end of pre-16S rRNA. The sequence is that of Putative pre-16S rRNA nuclease from Alcanivorax borkumensis (strain ATCC 700651 / DSM 11573 / NCIMB 13689 / SK2).